Here is a 513-residue protein sequence, read N- to C-terminus: Putative ATP-dependent RNA helicase QP509L (513 aa).

The Helicase ATP-binding domain occupies 110–262 (KKLLSPYGRF…KIIIHHLGQP (153 aa)). 123-130 (LNTGLGKT) contributes to the ATP binding site. A DEAH box motif is present at residues 215 to 218 (DEAH).

It belongs to the DEAD box helicase family. DEAH subfamily.

The enzyme catalyses ATP + H2O = ADP + phosphate + H(+). This chain is Putative ATP-dependent RNA helicase QP509L, found in African swine fever virus (isolate Tick/South Africa/Pretoriuskop Pr4/1996) (ASFV).